The following is a 408-amino-acid chain: Peptidase T (408 aa).

Histidine 78 is a binding site for Zn(2+). Aspartate 80 is a catalytic residue. Aspartate 141 contacts Zn(2+). Glutamate 175 acts as the Proton acceptor in catalysis. Glutamate 176, aspartate 198, and histidine 380 together coordinate Zn(2+).

It belongs to the peptidase M20B family. Zn(2+) serves as cofactor.

Its subcellular location is the cytoplasm. The catalysed reaction is Release of the N-terminal residue from a tripeptide.. Its function is as follows. Cleaves the N-terminal amino acid of tripeptides. In Clostridium botulinum (strain Langeland / NCTC 10281 / Type F), this protein is Peptidase T.